We begin with the raw amino-acid sequence, 443 residues long: ATP-dependent protease ATPase subunit HslU (443 aa).

ATP is bound by residues Ile18, 60–65, Asp256, Glu321, and Arg393; that span reads GVGKTE.

The protein belongs to the ClpX chaperone family. HslU subfamily. As to quaternary structure, a double ring-shaped homohexamer of HslV is capped on each side by a ring-shaped HslU homohexamer. The assembly of the HslU/HslV complex is dependent on binding of ATP.

It is found in the cytoplasm. In terms of biological role, ATPase subunit of a proteasome-like degradation complex; this subunit has chaperone activity. The binding of ATP and its subsequent hydrolysis by HslU are essential for unfolding of protein substrates subsequently hydrolyzed by HslV. HslU recognizes the N-terminal part of its protein substrates and unfolds these before they are guided to HslV for hydrolysis. This is ATP-dependent protease ATPase subunit HslU from Pectobacterium carotovorum subsp. carotovorum (strain PC1).